Reading from the N-terminus, the 234-residue chain is Mitochondrial assembly of ribosomal large subunit protein 1 (234 aa).

A disordered region spans residues 63 to 88 (SEPGLEERAEGTVNEGRPESDAADHT).

The protein belongs to the Iojap/RsfS family. As to quaternary structure, associates with the mitochondrial ribosome large subunit (39S) via interaction with MRPL12 and/or MRPL14. The interaction generates steric hindrance that is expected to prevent premature association of the 28S and 39S ribosomal subunits. Interacts with intermediates of the mitochondrial ribosome large subunit (mt-LSU) (recruits the mitochondrial ribosome and complex I assembly factor AltMIEF1 and NDUFAB1); regulates mitochondrial ribosomes assembly. Interacts with MRPL12 and MRPL14.

It localises to the mitochondrion matrix. Its function is as follows. Required for normal mitochondrial ribosome function and mitochondrial translation. May play a role in ribosome biogenesis by preventing premature association of the 28S and 39S ribosomal subunits. Interacts with mitochondrial ribosomal protein uL14m (MRPL14), probably blocking formation of intersubunit bridge B8, preventing association of the 28S and 39S ribosomal subunits. Addition to isolated mitochondrial ribosomal subunits partially inhibits translation, probably by interfering with the association of the 28S and 39S ribosomal subunits and the formation of functional ribosomes. May also participate in the assembly and/or regulation of the stability of the large subunit of the mitochondrial ribosome. May function as a ribosomal silencing factor. In Homo sapiens (Human), this protein is Mitochondrial assembly of ribosomal large subunit protein 1 (MALSU1).